A 221-amino-acid chain; its full sequence is Transcription factor bHLH148 (221 aa).

Disordered stretches follow at residues 1–45 (MASL…GEIH) and 70–89 (LNSS…GKAV). 2 stretches are compositionally biased toward low complexity: residues 26–41 (SASS…SSVS) and 72–82 (SSASTSSSPTA). The bHLH domain maps to 148-197 (KRRVSVLRLNKKSIPDVNRKVRVLGRLVPGCGKQSVPVILEEATDYIQAL).

As to quaternary structure, homodimer. Interacts with PRE3. Binds to RSA1.

The protein localises to the nucleus. Its function is as follows. bHLH transcription factor that binds DNA on specific sequence 5'-CANNTG-3' in target gene promoters. Negatively regulates brassinosteroid signaling. Together with BHLH148/RITF1, regulates the transcription of several genes involved in the detoxification of reactive oxygen species (ROS) generated by salt (NaCl) stress. Confers tolerance to salt and to the oxidative stress-inducing reagents hydrogen peroxide H(2)O(2) and methyl viologen (MV). This chain is Transcription factor bHLH148, found in Arabidopsis thaliana (Mouse-ear cress).